A 185-amino-acid chain; its full sequence is Ribosome-recycling factor (185 aa).

Residues 142 to 161 form a disordered region; it reads LVKDGEAGEDEGARAEKELD.

Belongs to the RRF family.

The protein resides in the cytoplasm. Functionally, responsible for the release of ribosomes from messenger RNA at the termination of protein biosynthesis. May increase the efficiency of translation by recycling ribosomes from one round of translation to another. The chain is Ribosome-recycling factor from Paenarthrobacter aurescens (strain TC1).